Reading from the N-terminus, the 189-residue chain is MTTSTTINKGDRLLHQNVLGSRRFSNYWWATIVTLGASGFLLAGISSYLKVNLLIVSDPTQLVFVPQGLVMGLYGAAGLLLATYLWLVILLDVGGGYNEFNQETGTIKIFRWGFPGKNRRIEIDSRIEDVQSVRIAVKEGLNPIRALYLRIKGRRDIPLTRVGQPLSLTELETEGAKLARFLGVSLEGL.

Helical transmembrane passes span 29-49 (WATI…SSYL) and 69-89 (LVMG…WLVI).

The protein belongs to the Ycf4 family.

It is found in the cellular thylakoid membrane. Its function is as follows. Seems to be required for the assembly of the photosystem I complex. This Nostoc punctiforme (strain ATCC 29133 / PCC 73102) protein is Photosystem I assembly protein Ycf4.